The primary structure comprises 274 residues: UPF0758 protein RHECIAT_CH0001935 (274 aa).

The disordered stretch occupies residues 1-57 (MAKRPAATSSNDELPFATEEPVADERSFFGGRPQNPTAPNARAALPASLSGPEHYHG). An MPN domain is found at 152–274 (VLSSWSSVIQ…HVSLKGLKLI (123 aa)). H223, H225, and D236 together coordinate Zn(2+). Residues 223-236 (HNHPSGDPTPSRAD) carry the JAMM motif motif.

Belongs to the UPF0758 family.

In Rhizobium etli (strain CIAT 652), this protein is UPF0758 protein RHECIAT_CH0001935.